A 446-amino-acid polypeptide reads, in one-letter code: WEB family protein At3g56270 (446 aa).

Residues 313 to 349 (TNVSRIEILRKLEEANEEVKQSKQALEVALNRVEIAS) are a coiled coil.

This sequence belongs to the WEB family.

The sequence is that of WEB family protein At3g56270 from Arabidopsis thaliana (Mouse-ear cress).